The chain runs to 104 residues: MRGQQAPPQQPTRVRTPRENENEVLGVIEQMLGASRVRVRCMDGKLRMGRIPGKLKRKIWVREDDVVIVTPWEVQSDEKCDVIWRYTKGQVDWLNKKGYLDFMR.

Residues 1–14 show a composition bias toward low complexity; it reads MRGQQAPPQQPTRV. Residues 1–20 form a disordered region; it reads MRGQQAPPQQPTRVRTPREN. An S1-like domain is found at 12–87; the sequence is TRVRTPRENE…EKCDVIWRYT (76 aa).

Belongs to the eIF-1A family.

Its function is as follows. Seems to be required for maximal rate of protein biosynthesis. Enhances ribosome dissociation into subunits and stabilizes the binding of the initiator Met-tRNA(I) to 40 S ribosomal subunits. This is Translation initiation factor 1A (eIF1A) from Methanococcus maripaludis (strain C6 / ATCC BAA-1332).